The chain runs to 479 residues: Anaerobic nitric oxide reductase flavorubredoxin (479 aa).

Residues 30-210 form a zinc metallo-hydrolase region; sequence LRGSSYNSYL…PFSRLVTPKI (181 aa). Fe cation contacts are provided by His79, Glu81, Asp83, His147, Asp166, and His227. Residues 254–393 form the Flavodoxin-like domain; the sequence is ITIFYDTMSN…LCRQHGRDIA (140 aa). FMN is bound by residues 260–264 and 342–369; these read TMSNN and AFGS…EMSL. The region spanning 423 to 474 is the Rubredoxin-like domain; that stretch reads GPKMQCSVCQWIYDPALGEPLQDVAPGTPWSDVPDNFLCPECSLGKDVFDVL. Residues Cys428, Cys431, Cys461, and Cys464 each contribute to the Fe cation site.

This sequence in the N-terminal section; belongs to the zinc metallo-hydrolase group 3 family. As to quaternary structure, homotetramer. It depends on Fe cation as a cofactor. The cofactor is FMN.

Its subcellular location is the cytoplasm. It functions in the pathway nitrogen metabolism; nitric oxide reduction. In terms of biological role, anaerobic nitric oxide reductase; uses NADH to detoxify nitric oxide (NO), protecting several 4Fe-4S NO-sensitive enzymes. Has at least 2 reductase partners, only one of which (NorW, flavorubredoxin reductase) has been identified. NO probably binds to the di-iron center; electrons enter from the NorW at rubredoxin and are transferred sequentially to the FMN center and the di-iron center. Also able to function as an aerobic oxygen reductase. The sequence is that of Anaerobic nitric oxide reductase flavorubredoxin from Salmonella arizonae (strain ATCC BAA-731 / CDC346-86 / RSK2980).